A 138-amino-acid chain; its full sequence is Small ribosomal subunit protein uS11c (138 aa).

The protein belongs to the universal ribosomal protein uS11 family. In terms of assembly, part of the 30S ribosomal subunit.

It is found in the plastid. It localises to the chloroplast. The sequence is that of Small ribosomal subunit protein uS11c from Phalaenopsis aphrodite subsp. formosana (Moth orchid).